The chain runs to 160 residues: uncharacterized protein (160 aa).

A signal peptide spans 1–29 (MCGLGIVPMVKPALFGMLILVIGTSTVQA).

This is an uncharacterized protein from Sinorhizobium fredii (strain NBRC 101917 / NGR234).